We begin with the raw amino-acid sequence, 498 residues long: Aminotransferase swnA (498 aa).

Belongs to the class-I pyridoxal-phosphate-dependent aminotransferase family. It depends on pyridoxal 5'-phosphate as a cofactor.

The protein operates within mycotoxin biosynthesis. Functionally, aminotransferase; part of the gene cluster that mediates the biosynthesis of swainsonine (SW), a cytotoxic fungal alkaloid and a potential cancer therapy drug. Swainsonine production occurs via a multibranched pathway and is dispensable for fungal colonization of plants and infection of insect hosts. The first step of swainsonine biosynthesis is the production of the precursor pipecolic acid (PA) via conversion of L-lysine (Lys) to 1-piperideine-6-carboxylate (P6C) by the aminotransferase swnA, the latter being further reduced to PA by the reductase swnR. PA can be converted from lysine by both the SW biosynthetic cluster and the unclustered genes such as lysine cyclodeaminase. The PKS-NRPS hybrid synthetase swnK uptakes and condensates PA and malonyl-CoA with and without skipping of the ketoreductase (KR) domain in order to produce 3 intermediates, 1-oxoindolizidine, (1S)-1-hydroxyindolizin, and (1R)-1-hydroxyindolizine; with the transisomer (1S)-1-hydroxyindolizin being predominant. The terminal thioester reductase (TE) domain of swnK is involved in reduction of the thioester bond to release the intermediate aldehydes. The oxidoreductase swnN could contribute to the reduction of 1-oxoindolizidine to (1S)-1-hydroxyindolizin and (1R)-1-hydroxyindolizine, contributing to the major route of SW production. The dioxygenase swnH2 would be responsible for the oxidization of (1R)-1-hydroxyindolizine into (1R,2S)-1,2-dihydroxyindolizine and of (1S)-1-hydroxyindolizin to yield both (1R,2S)-1,2-dihydroxyindolizine and (1S,2S)-1,2-dihydroxyindolizine. The dioxygenase swnH1 then performs the conversion of the 1,2-dihydroxyindolizine epimers to SW. The chain is Aminotransferase swnA from Metarhizium robertsii (strain ARSEF 23 / ATCC MYA-3075) (Metarhizium anisopliae (strain ARSEF 23)).